A 436-amino-acid polypeptide reads, in one-letter code: MANVVVIGAQWGDEGKGKITDLLSRSADVVVRYQGGVNAGHTIVVDDKVLKLHLIPSGILYKNKTCLIGSGTVVDPKILLKEIDMLIDNEIDISGLKLSSTSHVTMPYHRILDEAMEADRGSNKIGTTGRGIGPTYADKSQRNGIRVRDLLNKERLRDVIEIPLREKNGLLEKIYGIKPLKTEDIVEEYLDYGERLSKHVVDCTRTIHSASKNKKNILFEGAQGTLLDLDHGTYPFVTSSNPISGGACIGAGVGPTLIDRVIGVAKAYTTRVGEGPFPTELQGSINDQLCDRGSEFGTTTGRRRRCGWFDGVIGKYAVSVNGLDCLAVTKLDVLDELDEIQVCIAYDLDGERIDYFPTNSDDLKKCKPIFKKLKGWQCSTANCRNLSDLPQNAMNYLRFLAELMEVPIAIVSLGANRDQTIVIEDPIHGPKRALLR.

GTP contacts are provided by residues 12 to 18 (GDEGKGK) and 40 to 42 (GHT). The active-site Proton acceptor is the Asp13. 2 residues coordinate Mg(2+): Asp13 and Gly40. Residues 13–16 (DEGK), 38–41 (NAGH), Thr128, Arg142, Gln223, Thr238, and Arg302 each bind IMP. Residue His41 is the Proton donor of the active site. 298–304 (TTTGRRR) contacts substrate. GTP-binding positions include Arg304, 330-332 (KLD), and 412-414 (SLG).

This sequence belongs to the adenylosuccinate synthetase family. Homodimer. It depends on Mg(2+) as a cofactor.

The protein resides in the cytoplasm. The enzyme catalyses IMP + L-aspartate + GTP = N(6)-(1,2-dicarboxyethyl)-AMP + GDP + phosphate + 2 H(+). Its pathway is purine metabolism; AMP biosynthesis via de novo pathway; AMP from IMP: step 1/2. Functionally, plays an important role in the de novo pathway of purine nucleotide biosynthesis. Catalyzes the first committed step in the biosynthesis of AMP from IMP. In Prochlorococcus marinus (strain MIT 9312), this protein is Adenylosuccinate synthetase.